The chain runs to 73 residues: UPF0154 protein LGAS_0795 (73 aa).

The helical transmembrane segment at 3-23 threads the bilayer; the sequence is LGLAIFLIIIALLIGLVGGFY.

This sequence belongs to the UPF0154 family.

The protein resides in the cell membrane. The protein is UPF0154 protein LGAS_0795 of Lactobacillus gasseri (strain ATCC 33323 / DSM 20243 / BCRC 14619 / CIP 102991 / JCM 1131 / KCTC 3163 / NCIMB 11718 / NCTC 13722 / AM63).